The chain runs to 417 residues: MNIDIANQLRAAKKATTDLNLIQSDTRTIILKTLAANLEKHIENIIQENQKDLSLMLEQDPRYDRLLLNKERILSLANDVRKVADLPNPLGVNLLEKSMPNGLSIKKITVPLGVIAVIYESRPNVTIDIFSLCFKSGNVCILKGGKEAHFTNSYLLLLIKNTLKNFNINTDIVCLLPPERALMTQLLNATGLVDLCIPRGSQNLINFVRDNAKIPVIETGAGIVHTYFDKSGDLGKGKKIINNAKTRRVSVCNALDTLIIHADRLKDLPELVETLSQKNVIIYADQDAYQVLDKNYPKQLLIKAKPQDFGHEFLDYKLAIKTVPNIKAAIDHIQQFSSHHSEAVIAEDESAIDKFLTEVDAAAVYANASTSFTDGGEFGLGAEIGISTQKVHARGPMGLDALTSYKWVIRGTGQIRN.

This sequence belongs to the gamma-glutamyl phosphate reductase family.

The protein resides in the cytoplasm. The catalysed reaction is L-glutamate 5-semialdehyde + phosphate + NADP(+) = L-glutamyl 5-phosphate + NADPH + H(+). The protein operates within amino-acid biosynthesis; L-proline biosynthesis; L-glutamate 5-semialdehyde from L-glutamate: step 2/2. Functionally, catalyzes the NADPH-dependent reduction of L-glutamate 5-phosphate into L-glutamate 5-semialdehyde and phosphate. The product spontaneously undergoes cyclization to form 1-pyrroline-5-carboxylate. The polypeptide is Gamma-glutamyl phosphate reductase (Legionella pneumophila (strain Corby)).